The sequence spans 162 residues: Allantoicase (162 aa).

It belongs to the allantoicase family. As to quaternary structure, homohexamer. Expressed in zygote.

The catalysed reaction is allantoate + H2O = (S)-ureidoglycolate + urea. The protein operates within nitrogen metabolism; (S)-allantoin degradation; (S)-ureidoglycolate from allantoate (aminidohydrolase route): step 1/1. Catalyzes the degradation of allantoate to (-)-ureidoglycolate and (+)-ureidoglycolate to glyoxylate. The protein is Allantoicase of Chlamydomonas reinhardtii (Chlamydomonas smithii).